We begin with the raw amino-acid sequence, 130 residues long: RutC family protein in leuC 5'region (130 aa).

Belongs to the RutC family.

The polypeptide is RutC family protein in leuC 5'region (Leuconostoc mesenteroides subsp. cremoris).